We begin with the raw amino-acid sequence, 198 residues long: NADH-quinone oxidoreductase subunit B (198 aa).

A compositionally biased stretch (polar residues) spans 1–20 (MGLNPTQVSTSGSPQVSQPA). The segment at 1 to 29 (MGLNPTQVSTSGSPQVSQPATGVLDPRTG) is disordered. Residues Cys77, Cys78, Cys142, and Cys172 each coordinate [4Fe-4S] cluster.

It belongs to the complex I 20 kDa subunit family. In terms of assembly, NDH-1 is composed of 14 different subunits. Subunits NuoB, C, D, E, F, and G constitute the peripheral sector of the complex. [4Fe-4S] cluster serves as cofactor.

It is found in the cell inner membrane. The catalysed reaction is a quinone + NADH + 5 H(+)(in) = a quinol + NAD(+) + 4 H(+)(out). Functionally, NDH-1 shuttles electrons from NADH, via FMN and iron-sulfur (Fe-S) centers, to quinones in the respiratory chain. The immediate electron acceptor for the enzyme in this species is believed to be ubiquinone. Couples the redox reaction to proton translocation (for every two electrons transferred, four hydrogen ions are translocated across the cytoplasmic membrane), and thus conserves the redox energy in a proton gradient. The protein is NADH-quinone oxidoreductase subunit B of Afipia carboxidovorans (strain ATCC 49405 / DSM 1227 / KCTC 32145 / OM5) (Oligotropha carboxidovorans).